We begin with the raw amino-acid sequence, 260 residues long: MLLAVDCGNTNTVFALWDGDQMIGHWRTSTEWQRTADQYYVWLSTLMNLQGIKAQITDMIISSTVPRVVFNLRVLSDRYFNTRPLVVGKPECALPVDVRVDEGTTVGPDRLVNTVAGYEKYGGDLIVVDFGTATTFDVVAADGAYVGGVIAPGVNLSLEALHHAAAALPHVDISKPQNVIGTNTVACMQSGVFWGYVGLVREICDRIKAESGVPMKVISTGGLAPLFQQTADLFDAYEDDLTMQGLRRIHEHNKDIGNHA.

Position 6–13 (6–13 (DCGNTNTV)) interacts with ATP. 107–110 (GPDR) serves as a coordination point for substrate. Catalysis depends on D109, which acts as the Proton acceptor. K(+) is bound at residue D129. T132 lines the ATP pocket. T184 is a binding site for substrate.

It belongs to the type III pantothenate kinase family. Homodimer. The cofactor is NH4(+). Requires K(+) as cofactor.

The protein localises to the cytoplasm. The enzyme catalyses (R)-pantothenate + ATP = (R)-4'-phosphopantothenate + ADP + H(+). Its pathway is cofactor biosynthesis; coenzyme A biosynthesis; CoA from (R)-pantothenate: step 1/5. In terms of biological role, catalyzes the phosphorylation of pantothenate (Pan), the first step in CoA biosynthesis. The chain is Type III pantothenate kinase from Ruegeria sp. (strain TM1040) (Silicibacter sp.).